The chain runs to 20 residues: Agglutinin beta-2 chain isoform 1 (20 aa).

Positions 1 to 10 are enriched in polar residues; the sequence is TQSTGTSQTI. The disordered stretch occupies residues 1–20; the sequence is TQSTGTSQTIAVGLWGGPDN.

The protein belongs to the jacalin lectin family. Tetramer of four alpha chains associated with two or four beta chains.

Functionally, alpha-methyl-D-mannoside and D-mannose specific lectin. Binds IgA. The protein is Agglutinin beta-2 chain isoform 1 of Morus nigra (Black mulberry).